The chain runs to 60 residues: Large ribosomal subunit protein bL33 (60 aa).

It belongs to the bacterial ribosomal protein bL33 family.

In Flavobacterium johnsoniae (strain ATCC 17061 / DSM 2064 / JCM 8514 / BCRC 14874 / CCUG 350202 / NBRC 14942 / NCIMB 11054 / UW101) (Cytophaga johnsonae), this protein is Large ribosomal subunit protein bL33.